The sequence spans 504 residues: Probable cytochrome P450 6a21 (504 aa).

Heme is bound at residue Cys449.

The protein belongs to the cytochrome P450 family. The cofactor is heme.

The protein localises to the endoplasmic reticulum membrane. Its subcellular location is the microsome membrane. Its function is as follows. May be involved in the metabolism of insect hormones and in the breakdown of synthetic insecticides. In Drosophila melanogaster (Fruit fly), this protein is Probable cytochrome P450 6a21 (Cyp6a21).